The chain runs to 541 residues: MLANLKIRTGMFWVLSLFSLTLLFSTASAWWAAVGSDQQITELDQTAHQSDRLNNALLMAIRSSANVSSGFIEQLGGHDESAGKRMALSVELNNKSQTLVDEFVENAREPALRVLATELQATFAEYAKAVAGQREATRQRSLEQYFKVNSDAGNAMGRLQTLRQQLVTTLSERGQQIMLESDRRLARAQLLSLCLLGMTVVLAVLCWAFIAQRVLHPLREAGGHFRRIASGDLSVPVQGQGNNEIGQLFHELQRMQQSQRDTLGQINNCARQLDAAASALNAVTEESANNLRQQGQELEQAATAVTEMTTAVEEVARNAITTSQTTSESNQLAAQSRRQVSENIDGTEAMTREIQTSSAHLQQLVGQVRDIGKVLEVIRSVSEQTNLLALNAAIEAARAGEAGRGFAVVADEVRTLAYRTQQSTQEIEQMIGSVQAGTEAAVASMQASTNRAQSTLDVTLASGQVLEGIYSAIGEINERNLVIASAAEEQAQVAREVDRNLLNIRELSNHSAAGAQQTSEASKALSGLVGEMTALVGRFKV.

Over 1 to 10 (MLANLKIRTG) the chain is Cytoplasmic. A helical transmembrane segment spans residues 11-31 (MFWVLSLFSLTLLFSTASAWW). Topologically, residues 32–189 (AAVGSDQQIT…ESDRRLARAQ (158 aa)) are periplasmic. Positions 35–187 (GSDQQITELD…MLESDRRLAR (153 aa)) are ligand-binding domain. Residues 190-210 (LLSLCLLGMTVVLAVLCWAFI) traverse the membrane as a helical segment. Over 211–541 (AQRVLHPLRE…MTALVGRFKV (331 aa)) the chain is Cytoplasmic. One can recognise an HAMP domain in the interval 212–264 (QRVLHPLREAGGHFRRIASGDLSVPVQGQGNNEIGQLFHELQRMQQSQRDTLG). The 237-residue stretch at 269 to 505 (CARQLDAAAS…EVDRNLLNIR (237 aa)) folds into the Methyl-accepting transducer domain. Residues 322-341 (TSQTTSESNQLAAQSRRQVS) form a disordered region.

This sequence belongs to the methyl-accepting chemotaxis (MCP) protein family.

The protein localises to the cell inner membrane. Chemotactic-signal transducers respond to changes in the concentration of attractants and repellents in the environment, transduce a signal from the outside to the inside of the cell, and facilitate sensory adaptation through the variation of the level of methylation. PcaY is responsible for the detection of multiple aromatic and hydroaromatic compounds that are metabolized through the beta-ketoadipate catabolic pathway, including vanillin, vanillate, 4-hydroxybenzoate (4-HBA), benzoate and protocatechuate. It also senses several nonmetabolizable aromatic compounds. This Pseudomonas putida (strain ATCC 700007 / DSM 6899 / JCM 31910 / BCRC 17059 / LMG 24140 / F1) protein is Methyl-accepting chemotaxis protein PcaY.